We begin with the raw amino-acid sequence, 611 residues long: Phosphoenolpyruvate carboxykinase [GTP] (611 aa).

Substrate is bound by residues R82 and Y222–G224. Mn(2+) contacts are provided by K231 and H251. Residue S273 participates in substrate binding. A274–N279 serves as a coordination point for GTP. C275 is an active-site residue. Residue D298 participates in Mn(2+) binding. N389–R391 lines the substrate pocket. GTP is bound by residues R391, R422, and F517–N520.

The protein belongs to the phosphoenolpyruvate carboxykinase [GTP] family. Monomer. It depends on Mn(2+) as a cofactor.

The protein localises to the cytoplasm. The catalysed reaction is oxaloacetate + GTP = phosphoenolpyruvate + GDP + CO2. The protein operates within carbohydrate biosynthesis; gluconeogenesis. In terms of biological role, catalyzes the conversion of oxaloacetate (OAA) to phosphoenolpyruvate (PEP), the rate-limiting step in the metabolic pathway that produces glucose from lactate and other precursors derived from the citric acid cycle. The protein is Phosphoenolpyruvate carboxykinase [GTP] of Arthrobacter sp. (strain FB24).